We begin with the raw amino-acid sequence, 132 residues long: Glycine cleavage system H protein (132 aa).

Residues 27–109 (FATIGISAFA…FDFGWILKVK (83 aa)) form the Lipoyl-binding domain. The residue at position 68 (Lys-68) is an N6-lipoyllysine.

This sequence belongs to the GcvH family. The glycine cleavage system is composed of four proteins: P, T, L and H. (R)-lipoate serves as cofactor.

Functionally, the glycine cleavage system catalyzes the degradation of glycine. The H protein shuttles the methylamine group of glycine from the P protein to the T protein. The sequence is that of Glycine cleavage system H protein from Rhodopirellula baltica (strain DSM 10527 / NCIMB 13988 / SH1).